The following is a 501-amino-acid chain: NAD(P)H-quinone oxidoreductase chain 4, chloroplastic (501 aa).

The next 14 membrane-spanning stretches (helical) occupy residues 5 to 25, 38 to 58, 85 to 105, 112 to 130, 135 to 155, 168 to 188, 209 to 229, 243 to 263, 275 to 295, 306 to 326, 331 to 351, 387 to 407, 417 to 437, and 463 to 483; these read FPWL…IFFL, ICIC…HFQL, GLSI…TLAA, SRLF…IGSF, LLLF…LLAM, FILY…GIGL, ALEI…LPII, HYST…YGLV, SIFS…AALT, IAYS…SITD, GAIL…FLAG, LALP…GIIT, ILIT…LLSM, and LFVS…PDFV.

Belongs to the complex I subunit 4 family.

Its subcellular location is the plastid. The protein localises to the chloroplast thylakoid membrane. The enzyme catalyses a plastoquinone + NADH + (n+1) H(+)(in) = a plastoquinol + NAD(+) + n H(+)(out). It catalyses the reaction a plastoquinone + NADPH + (n+1) H(+)(in) = a plastoquinol + NADP(+) + n H(+)(out). This Eucalyptus globulus subsp. globulus (Tasmanian blue gum) protein is NAD(P)H-quinone oxidoreductase chain 4, chloroplastic.